We begin with the raw amino-acid sequence, 263 residues long: 3'-5' ssDNA/RNA exonuclease TatD (263 aa).

3 residues coordinate a divalent metal cation: Glu91, His127, and His152.

It belongs to the metallo-dependent hydrolases superfamily. TatD-type hydrolase family. TatD subfamily. As to quaternary structure, monomer. Mg(2+) is required as a cofactor.

Its subcellular location is the cytoplasm. Functionally, 3'-5' exonuclease that prefers single-stranded DNA and RNA. May play a role in the H(2)O(2)-induced DNA damage repair. The chain is 3'-5' ssDNA/RNA exonuclease TatD from Cronobacter sakazakii (strain ATCC BAA-894) (Enterobacter sakazakii).